A 290-amino-acid chain; its full sequence is Type II secretion system protein C (290 aa).

Over 1–28 (MTLPFRNDLLSSLLARCKTVPLSRFSQP) the chain is Cytoplasmic. The chain crosses the membrane as a helical span at residues 29–46 (LFWLLLLLLAHQCAGLTW). The Periplasmic portion of the chain corresponds to 47–290 (RLLDLGSQQA…LYDVYVGLSE (244 aa)).

Belongs to the GSP C family.

It is found in the cell inner membrane. Involved in a type II secretion system (T2SS, formerly general secretion pathway, GSP) for the export of proteins. This chain is Type II secretion system protein C (exeC), found in Aeromonas hydrophila.